A 303-amino-acid polypeptide reads, in one-letter code: Bifunctional protein FolD (303 aa).

Residues 169 to 171 (GRG), Thr-196, and Val-237 each bind NADP(+).

This sequence belongs to the tetrahydrofolate dehydrogenase/cyclohydrolase family. Homodimer.

It catalyses the reaction (6R)-5,10-methylene-5,6,7,8-tetrahydrofolate + NADP(+) = (6R)-5,10-methenyltetrahydrofolate + NADPH. The catalysed reaction is (6R)-5,10-methenyltetrahydrofolate + H2O = (6R)-10-formyltetrahydrofolate + H(+). It participates in one-carbon metabolism; tetrahydrofolate interconversion. In terms of biological role, catalyzes the oxidation of 5,10-methylenetetrahydrofolate to 5,10-methenyltetrahydrofolate and then the hydrolysis of 5,10-methenyltetrahydrofolate to 10-formyltetrahydrofolate. The chain is Bifunctional protein FolD from Micrococcus luteus (strain ATCC 4698 / DSM 20030 / JCM 1464 / CCM 169 / CCUG 5858 / IAM 1056 / NBRC 3333 / NCIMB 9278 / NCTC 2665 / VKM Ac-2230) (Micrococcus lysodeikticus).